The primary structure comprises 276 residues: LIMGHMVNAIYQIDEFVNLGANSIEIDVSFDDSANPEYTYHGIPCDCRRWCTKWEYFNGFLKALRKATTPGDSKYHEKLVLVVFDLKTNSLYNYQAYDAGKKLAENLLQHYWNNGNNGGRAYIVLSIPNLAHYKLITGFKETLKNKGHPELMEKVGHDFSGNDNLDQVAKAYKKAGVTGHVWQSDGITNCIASFIRGIDRAKKAVANRDSSNGFINKVYYWTVDKYSTTREALDAGVDGIMTNYPDVIANVLNESAYKTKFRLATYADNPWETFKN.

The active site involves histidine 5. Mg(2+) contacts are provided by glutamate 25 and aspartate 27. Histidine 41 acts as the Nucleophile in catalysis. Cystine bridges form between cysteine 45–cysteine 51 and cysteine 47–cysteine 190. A Mg(2+)-binding site is contributed by aspartate 85. Residue asparagine 253 is glycosylated (N-linked (GlcNAc...) asparagine).

It belongs to the arthropod phospholipase D family. Class II subfamily. Requires Mg(2+) as cofactor. Expressed by the venom gland.

The protein localises to the secreted. It carries out the reaction an N-(acyl)-sphingosylphosphocholine = an N-(acyl)-sphingosyl-1,3-cyclic phosphate + choline. The enzyme catalyses an N-(acyl)-sphingosylphosphoethanolamine = an N-(acyl)-sphingosyl-1,3-cyclic phosphate + ethanolamine. The catalysed reaction is a 1-acyl-sn-glycero-3-phosphocholine = a 1-acyl-sn-glycero-2,3-cyclic phosphate + choline. It catalyses the reaction a 1-acyl-sn-glycero-3-phosphoethanolamine = a 1-acyl-sn-glycero-2,3-cyclic phosphate + ethanolamine. Functionally, dermonecrotic toxins cleave the phosphodiester linkage between the phosphate and headgroup of certain phospholipids (sphingolipid and lysolipid substrates), forming an alcohol (often choline) and a cyclic phosphate. This toxin acts on sphingomyelin (SM). It may also act on ceramide phosphoethanolamine (CPE), lysophosphatidylcholine (LPC) and lysophosphatidylethanolamine (LPE), but not on lysophosphatidylserine (LPS), and lysophosphatidylglycerol (LPG). It acts by transphosphatidylation, releasing exclusively cyclic phosphate products as second products. Induces dermonecrosis, hemolysis, increased vascular permeability, edema, inflammatory response, and platelet aggregation. In Loxosceles deserta (Desert recluse spider), this protein is Dermonecrotic toxin LdSicTox-alphaIB2.